A 152-amino-acid polypeptide reads, in one-letter code: ALK and LTK ligand 1 (152 aa).

The N-terminal stretch at 1–23 is a signal peptide; sequence MRAEKRWHILLSMILLLITSSQC. Disulfide bonds link cysteine 113–cysteine 149 and cysteine 127–cysteine 136.

This sequence belongs to the ALKAL family. In terms of tissue distribution, expressed at low level in the notochord and iridophore stripes, the eye and the swim bladder.

It localises to the secreted. Its subcellular location is the cell membrane. Functionally, cytokine that acts as a physiological ligand for receptor tyrosine kinases LTK and ALK. Required for iridophore development in the adult eye by acting as a receptor for LTK. In Danio rerio (Zebrafish), this protein is ALK and LTK ligand 1.